Consider the following 336-residue polypeptide: Ketol-acid reductoisomerase (NADP(+)) (336 aa).

Positions 1–182 (MAVIYYDKDA…GVTRAGVIET (182 aa)) constitute a KARI N-terminal Rossmann domain. NADP(+) contacts are provided by residues 25-28 (FGSQ), arginine 48, serine 51, serine 53, and 83-86 (DEHQ). The active site involves histidine 108. Glycine 134 is an NADP(+) binding site. The region spanning 183–328 (TFKEETETDL…KELRKMMPWL (146 aa)) is the KARI C-terminal knotted domain. Mg(2+) contacts are provided by aspartate 191, glutamate 195, glutamate 227, and glutamate 231. A substrate-binding site is contributed by serine 252.

Belongs to the ketol-acid reductoisomerase family. It depends on Mg(2+) as a cofactor.

It catalyses the reaction (2R)-2,3-dihydroxy-3-methylbutanoate + NADP(+) = (2S)-2-acetolactate + NADPH + H(+). The enzyme catalyses (2R,3R)-2,3-dihydroxy-3-methylpentanoate + NADP(+) = (S)-2-ethyl-2-hydroxy-3-oxobutanoate + NADPH + H(+). It participates in amino-acid biosynthesis; L-isoleucine biosynthesis; L-isoleucine from 2-oxobutanoate: step 2/4. Its pathway is amino-acid biosynthesis; L-valine biosynthesis; L-valine from pyruvate: step 2/4. Involved in the biosynthesis of branched-chain amino acids (BCAA). Catalyzes an alkyl-migration followed by a ketol-acid reduction of (S)-2-acetolactate (S2AL) to yield (R)-2,3-dihydroxy-isovalerate. In the isomerase reaction, S2AL is rearranged via a Mg-dependent methyl migration to produce 3-hydroxy-3-methyl-2-ketobutyrate (HMKB). In the reductase reaction, this 2-ketoacid undergoes a metal-dependent reduction by NADPH to yield (R)-2,3-dihydroxy-isovalerate. This Thermotoga neapolitana (strain ATCC 49049 / DSM 4359 / NBRC 107923 / NS-E) protein is Ketol-acid reductoisomerase (NADP(+)).